The following is a 523-amino-acid chain: UvrABC system protein C (523 aa).

The region spanning 15–93 is the GIY-YIG domain; sequence HLPGCYLFKD…IKKHWPRYNI (79 aa). A UVR domain is found at 197 to 232; it reads RELIESMETEMKEMAAKQMFEQAMELRDEIAALEYL.

It belongs to the UvrC family. As to quaternary structure, interacts with UvrB in an incision complex.

Its subcellular location is the cytoplasm. Its function is as follows. The UvrABC repair system catalyzes the recognition and processing of DNA lesions. UvrC both incises the 5' and 3' sides of the lesion. The N-terminal half is responsible for the 3' incision and the C-terminal half is responsible for the 5' incision. This Methanosarcina mazei (strain ATCC BAA-159 / DSM 3647 / Goe1 / Go1 / JCM 11833 / OCM 88) (Methanosarcina frisia) protein is UvrABC system protein C.